Consider the following 90-residue polypeptide: MFNTALLLAQASPTTAGWSLSVGIIMCLCNVFAFVIGYFAIQKTGKGKDLALPQLASKKTFGLPELLATMSFGHILGAGMVLGLASSGIL.

2 helical membrane passes run 20-42 and 67-89; these read LSVG…FAIQ and LATM…SSGI.

It belongs to the PsaG/PsaK family.

It is found in the cellular thylakoid membrane. The protein is Photosystem I reaction center subunit PsaK 2 (psaK2) of Synechocystis sp. (strain ATCC 27184 / PCC 6803 / Kazusa).